The primary structure comprises 506 residues: Histidine ammonia-lyase (506 aa).

Positions 143-145 (ASG) form a cross-link, 5-imidazolinone (Ala-Gly). Position 144 is a 2,3-didehydroalanine (Ser) (Ser144).

This sequence belongs to the PAL/histidase family. Post-translationally, contains an active site 4-methylidene-imidazol-5-one (MIO), which is formed autocatalytically by cyclization and dehydration of residues Ala-Ser-Gly.

It is found in the cytoplasm. It catalyses the reaction L-histidine = trans-urocanate + NH4(+). It participates in amino-acid degradation; L-histidine degradation into L-glutamate; N-formimidoyl-L-glutamate from L-histidine: step 1/3. This is Histidine ammonia-lyase from Salmonella arizonae (strain ATCC BAA-731 / CDC346-86 / RSK2980).